Here is a 654-residue protein sequence, read N- to C-terminus: Transcription factor E2-alpha (654 aa).

The 9aaTAD motif lies at 19–27 (LLDFSMMFP). A disordered region spans residues 31 to 103 (TNGKGRPASL…LGPGLGGKSG (73 aa)). Low complexity predominate over residues 55-68 (SSGSWGSGDQSSSS). A compositionally biased stretch (polar residues) spans 69–79 (FDPSRTFSEGT). Over residues 84–94 (SHSSLSSSTFL) the composition is skewed to low complexity. Phosphoserine is present on residues Ser-134 and Ser-139. Disordered stretches follow at residues 135–205 (PGPL…SAKT), 239–268 (MLGG…FGGL), 292–329 (SFSS…GSSG), and 343–385 (DHSS…YDGG). Over residues 147–156 (SQYYPSYSGS) the composition is skewed to low complexity. The short motif at 170 to 176 (PKKVRKV) is the Nuclear localization signal element. The span at 256–268 (VGSSGSSSTFGGL) shows a compositional bias: low complexity. Residues 343–354 (DHSSNNFSSSPS) show a composition bias toward low complexity. The residue at position 355 (Thr-355) is a Phosphothreonine. The residue at position 359 (Ser-359) is a Phosphoserine. At Arg-371 the chain carries Omega-N-methylarginine. Ser-379 is subject to Phosphoserine. Residues 389 to 425 (LQSKIEDHLDEAIHVLRSHAVGTAGDMHTLLPGHGAL) are leucine-zipper. The segment at 461 to 552 (NHAALPSQPG…KAEREKERRV (92 aa)) is disordered. A Glycyl lysine isopeptide (Lys-Gly) (interchain with G-Cter in SUMO2) cross-link involves residue Lys-498. Over residues 512–523 (DHSEEEKKELKA) the composition is skewed to basic and acidic residues. A Phosphoserine modification is found at Ser-529. At Asp-531 the chain carries Phosphothreonine. The segment covering 542–552 (QKAEREKERRV) has biased composition (basic and acidic residues). The region spanning 549 to 602 (ERRVANNARERLRVRDINEAFKELGRMCQLHLNSEKPQTKLLILHQAVSVILNL) is the bHLH domain. A Glycyl lysine isopeptide (Lys-Gly) (interchain with G-Cter in SUMO2) cross-link involves residue Lys-625. Residues 633–654 (PQMVLSAPHPGLSEAHNPAGHM) form a disordered region.

As to quaternary structure, homodimer. Heterodimer; efficient DNA binding requires dimerization with another bHLH protein. Forms a heterodimer with ASH1, TWIST1 and TWIST2. Forms a heterodimer with MYOG; heterodimerization enhances MYOG DNA-binding and transcriptional activities. Forms a heterodimer with NEUROD1; the heterodimer is inhibited in presence of ID2, but not NR0B2, to E-box element. Forms a heterodimer with TCF15; the heterodimer binds E-box element. Forms a heterodimer with ATOH8; repress transcription of TCF3 and TCF3/NEUROG3 dimer-induced transactivation of E box-dependent promoters. Component of a nuclear TAL-1 complex composed at least of CBFA2T3, LDB1, TAL1 and TCF3. Interacts with NEUROD2, PTF1A and TGFB1I1. Interacts with EP300 and UBE2I. Interacts with BHLHA9. Interacts with ASB2; the interaction is mediated by SKP2 and targets TCF3 for Notch-induced proteasomal degradation. In terms of assembly, forms a heterodimer with ATOH7; required for ATOH7 DNA-binding. Interacts with RALGAPA1 and FIGLA. In terms of processing, phosphorylated following NGF stimulation. Undergoes Notch-induced ubiquitination and subsequent proteasomal degradation which is mediated by ASB1 or ASB2, the substrate-recognition components of probable ECS E3 ubiquitin-protein ligase complexes.

Its subcellular location is the nucleus. Transcriptional regulator involved in the initiation of neuronal differentiation and mesenchymal to epithelial transition. Heterodimers between TCF3 and tissue-specific basic helix-loop-helix (bHLH) proteins play major roles in determining tissue-specific cell fate during embryogenesis, like muscle or early B-cell differentiation. Together with TCF15, required for the mesenchymal to epithelial transition. Dimers bind DNA on E-box motifs: 5'-CANNTG-3'. Binds to the kappa-E2 site in the kappa immunoglobulin gene enhancer. Binds to IEB1 and IEB2, which are short DNA sequences in the insulin gene transcription control region. In terms of biological role, facilitates ATOH7 binding to DNA at the consensus sequence 5'-CAGGTG-3', and positively regulates transcriptional activity. The polypeptide is Transcription factor E2-alpha (TCF3) (Homo sapiens (Human)).